We begin with the raw amino-acid sequence, 406 residues long: MSQPITRENFDEWMLPVYAPAPFIPVRGEGSRLWDQQGKEYIDFAGGIAVNALGHAHPELREALNEQASKFWHTGNGYTNEPVLRLAKKLIDATFADRVFFCNSGAEANEAALKLARKFAHDRYGSHKSGIVAFKNAFHGRTLFTVSAGGQPAYSQDFAPLPPDIRHAAYNDLNSASALIDDSTCAVIVEPIQGEGGVVPASNAFLQGLRELCDRHNALLIFDEVQTGVGRTGELYAYMHYGVTPDLLTTAKALGGGFPVGALLATEECASVMTVGTHGTTYGGNPLASAVAGKVLDLINTPEMLIGVKQRHDWFVERLNTINHRYGLFSEVRGLGLLIGCVLNADYAGQAKQISQEAAKAGVMVLIAGGNVVRFAPALNVSEEEVTTGLDRFAVACERFVSGGSS.

Residue K252 is modified to N6-(pyridoxal phosphate)lysine.

This sequence belongs to the class-III pyridoxal-phosphate-dependent aminotransferase family. AstC subfamily. Pyridoxal 5'-phosphate is required as a cofactor.

The enzyme catalyses N(2)-succinyl-L-ornithine + 2-oxoglutarate = N-succinyl-L-glutamate 5-semialdehyde + L-glutamate. It functions in the pathway amino-acid degradation; L-arginine degradation via AST pathway; L-glutamate and succinate from L-arginine: step 3/5. Catalyzes the transamination of N(2)-succinylornithine and alpha-ketoglutarate into N(2)-succinylglutamate semialdehyde and glutamate. Can also act as an acetylornithine aminotransferase. The polypeptide is Succinylornithine transaminase (Escherichia fergusonii (strain ATCC 35469 / DSM 13698 / CCUG 18766 / IAM 14443 / JCM 21226 / LMG 7866 / NBRC 102419 / NCTC 12128 / CDC 0568-73)).